The following is a 172-amino-acid chain: Ly6/PLAUR domain-containing protein 6B (172 aa).

The signal sequence occupies residues 1 to 25; the sequence is MLLLCHILAVTILQILIISENWVFA. A UPAR/Ly6 domain is found at 46 to 137; the sequence is FKCFTCENAG…VELPTNHTNA (92 aa). The segment at 46-140 is sufficient for inhibiting alpha-7 nAChR currents; the sequence is FKCFTCENAG…PTNHTNAVFA (95 aa). Cystine bridges form between Cys48/Cys76, Cys51/Cys60, Cys69/Cys95, Cys101/Cys120, Cys106/Cys117, and Cys121/Cys126. Ser148 carries the GPI-anchor amidated serine lipid modification. A propeptide spans 149-172 (removed in mature form); it reads GSSVSSVPSPYLLVLAWLFMLPLL.

The protein resides in the cell membrane. In terms of biological role, likely acts as a modulator of nicotinic acetylcholine receptors (nAChRs) activity. In vitro acts on nAChRs in a subtype- and stoichiometry-dependent manner. Modulates specifically alpha-3(3):beta-4(2) nAChRs by enhancing the sensitivity to ACh, decreasing ACh-induced maximal current response and increasing the rate of desensitization to ACh; has no effect on alpha-7 homomeric nAChRs; modulates alpha-3(2):alpha-5:beta-4(2) nAChRs in the context of CHRNA5/alpha-5 variant Asn-398 but not its wild-type sequence. However, according to another report in vitro it can weakly inhibits alpha-7 nAChRs. The sequence is that of Ly6/PLAUR domain-containing protein 6B (Lypd6b) from Mus musculus (Mouse).